A 169-amino-acid polypeptide reads, in one-letter code: uncharacterized protein (169 aa).

It to M.tuberculosis Rv1480.

This is an uncharacterized protein from Mycobacterium avium.